Here is a 466-residue protein sequence, read N- to C-terminus: Methylenetetrahydrofolate--tRNA-(uracil-5-)-methyltransferase TrmFO (466 aa).

Residue 14–19 participates in FAD binding; sequence GGGLAG.

The protein belongs to the MnmG family. TrmFO subfamily. It depends on FAD as a cofactor.

The protein localises to the cytoplasm. It catalyses the reaction uridine(54) in tRNA + (6R)-5,10-methylene-5,6,7,8-tetrahydrofolate + NADH + H(+) = 5-methyluridine(54) in tRNA + (6S)-5,6,7,8-tetrahydrofolate + NAD(+). The catalysed reaction is uridine(54) in tRNA + (6R)-5,10-methylene-5,6,7,8-tetrahydrofolate + NADPH + H(+) = 5-methyluridine(54) in tRNA + (6S)-5,6,7,8-tetrahydrofolate + NADP(+). Catalyzes the folate-dependent formation of 5-methyl-uridine at position 54 (M-5-U54) in all tRNAs. The polypeptide is Methylenetetrahydrofolate--tRNA-(uracil-5-)-methyltransferase TrmFO (Brucella abortus (strain 2308)).